The following is a 104-amino-acid chain: MSAIQGIQGVISQLQATAMSARAQEPMPQPTISFAGQLHAALDRISDTQNTARVQAEKFTLGEPGVALNDVMTDMQKASVSMQMGIQVRNKLVAAYQEVMSMQV.

Belongs to the FliE family.

It localises to the bacterial flagellum basal body. This Escherichia fergusonii (strain ATCC 35469 / DSM 13698 / CCUG 18766 / IAM 14443 / JCM 21226 / LMG 7866 / NBRC 102419 / NCTC 12128 / CDC 0568-73) protein is Flagellar hook-basal body complex protein FliE.